Consider the following 37-residue polypeptide: Large ribosomal subunit protein bL36 (37 aa).

Belongs to the bacterial ribosomal protein bL36 family.

This chain is Large ribosomal subunit protein bL36, found in Geobacter metallireducens (strain ATCC 53774 / DSM 7210 / GS-15).